Here is a 115-residue protein sequence, read N- to C-terminus: MDILRTLASEQLKKDVPEFSNGDTVKVHVKIKEGSRERIQIFEGIVIKRQGGGIAETFTVRRIASGVGVERTFPVHSPRVEKVEVTRRGQVRRAKLYYLRDRVGKAAFKIKEKRR.

It belongs to the bacterial ribosomal protein bL19 family.

Functionally, this protein is located at the 30S-50S ribosomal subunit interface and may play a role in the structure and function of the aminoacyl-tRNA binding site. This is Large ribosomal subunit protein bL19 from Alkaliphilus oremlandii (strain OhILAs) (Clostridium oremlandii (strain OhILAs)).